The primary structure comprises 403 residues: MEKMTTLKSSENKGILTSTPIRGAGDGMETEEPPKSVEVTHGVQPINQHVLPSPRKKVSSDSPGVLQLGKILNERTVEVEAVRIFVPKAAITHDIPTKNTKVKSLGHHREELHNQAEVVTDPRKELSEVKKVLEKLKNSERRLLQDKEGLSNQLRVQTEINRELKKLLVASVGDDPQYHFERLAREKNQLILENEALGRNTAQLSEQLERMSIQCDVWRSKFLASRVMADELTNFRVVLQRQNRDAQSAIQDLLSEREQFRQEMTSTQKFLEELLVSLQWGREQTYSPNTQPHSTADLALTNHGLAQAIHAHLLGNVGISHQKKIPTTVEFCSTPAEKMAEKVLRILDPVACTESSPDNQFAESSPTTLLTTKKNIGRFHPYTRYENITFNCCNHCQGELIAL.

Positions 1–63 (MEKMTTLKSS…PRKKVSSDSP (63 aa)) are disordered. Positions 22-26 (RGAGD) match the Tankyrase-binding motif motif. Ser53 is subject to Phosphoserine. Residues 123–216 (RKELSEVKKV…QLERMSIQCD (94 aa)) are a coiled coil. A Phosphoserine modification is found at Ser356. Residues 397-403 (QGELIAL) form an essential for interaction with GORASP2 region.

Interacts with GORASP2. Interacts with the GTP-bound form of RAB2, but not with other Golgi Rab proteins. Identified in a complex with RAB2 and GORASP2. ADP-ribosylated by tankyrase TNKS and TNKS2. Poly-ADP-ribosylated protein is recognized by RNF146, followed by ubiquitination. In terms of processing, ubiquitinated by RNF146 when poly-ADP-ribosylated, leading to its degradation.

The protein localises to the golgi apparatus membrane. Required for normal Golgi structure and for protein transport from the endoplasmic reticulum (ER) through the Golgi apparatus to the cell surface. This chain is Golgin-45 (Blzf1), found in Mus musculus (Mouse).